Here is a 442-residue protein sequence, read N- to C-terminus: GTPase Der (442 aa).

2 EngA-type G domains span residues 3-167 (PTIV…PPDV) and 177-350 (PRIA…AAAM). GTP-binding positions include 9 to 16 (GRPNVGKS), 56 to 60 (DTAGF), 119 to 122 (NKSE), 183 to 190 (GRPNVGKS), 230 to 234 (DTAGL), and 295 to 298 (NKWD). Positions 351-435 (VNLSTPRLTR…PLRIQFRTAH (85 aa)) constitute a KH-like domain.

The protein belongs to the TRAFAC class TrmE-Era-EngA-EngB-Septin-like GTPase superfamily. EngA (Der) GTPase family. As to quaternary structure, associates with the 50S ribosomal subunit.

GTPase that plays an essential role in the late steps of ribosome biogenesis. The chain is GTPase Der from Aromatoleum aromaticum (strain DSM 19018 / LMG 30748 / EbN1) (Azoarcus sp. (strain EbN1)).